The chain runs to 701 residues: MHSDELLVEILVEELPAQALLNEYKEMPKKLHALLNKRALEAGNIEIFYTPRRLCLLIKDFPLLTQETKEEFFGPPIKIAFNNEDKTQGLNALGLGFYQKLGLKDHQHFQTAFKNNKEVLYHAKIHEKEPTKDLIMPIVLEFLEGLNFGKSMRWGNVEKSFIRPIHNICVLFNGENFNGIEVKEYGFKTKQATKVHRQEGFDFIEVDSPKAYFEVLEKNHVILDPKKREAKILQEIKELETKHDIIVEIDRDLLDEVVAITEYPSALLGEFDKAFLKLPNEIITTSMKENQRYFAVFDQKSQEESPTLHNGFIVVSNAINKDKQKIIAGNQKVLKARLSDAVFFYENDLKKPLDNTPLESVVFVQGLGTLKDKMEREAIIAQYLTQKYAPSLNMPLEKALELIGRAVKIAKADLLSEVVYEFSELQGIMGYYYALKQNENELVALSVKEQYLPASENAPLPSSVFSAIVALSLKLDSLFSLFSAGKIPSGSKDPFALRRLSFGLLKIVAHYGLEFDLKADLKNLFEKVGVYQSFDLEILEKFLLERFHNLIDCNPSIIRSVLNTNERDIVKIIQKVKALKRFLDDPKNAQKKELLFSAFKRLANINKDRNPNESSEFSISLFKELQEHALFEAFNAIQTSAFEGLDSKIEAYFGLHAPLEEYFKSVLVMDKDIEIQKNRKNFLWGVYQSFLEIGDIKEIAI.

The protein belongs to the class-II aminoacyl-tRNA synthetase family. In terms of assembly, tetramer of two alpha and two beta subunits.

The protein resides in the cytoplasm. It catalyses the reaction tRNA(Gly) + glycine + ATP = glycyl-tRNA(Gly) + AMP + diphosphate. The polypeptide is Glycine--tRNA ligase beta subunit (Helicobacter pylori (strain HPAG1)).